Reading from the N-terminus, the 239-residue chain is Small ribosomal subunit protein uS3 (239 aa).

In terms of domain architecture, KH type-2 spans 39 to 107; that stretch reads VRQVLRKKMS…SVHINVIEVR (69 aa). The disordered stretch occupies residues 217 to 239; it reads KQDDISRGDRNADRSSRRSREVR.

It belongs to the universal ribosomal protein uS3 family. Part of the 30S ribosomal subunit. Forms a tight complex with proteins S10 and S14.

Functionally, binds the lower part of the 30S subunit head. Binds mRNA in the 70S ribosome, positioning it for translation. The protein is Small ribosomal subunit protein uS3 of Xylella fastidiosa (strain 9a5c).